The primary structure comprises 243 residues: Pyridoxine 5'-phosphate synthase (243 aa).

Position 9 (asparagine 9) interacts with 3-amino-2-oxopropyl phosphate. 11–12 (DH) provides a ligand contact to 1-deoxy-D-xylulose 5-phosphate. Residue arginine 20 coordinates 3-amino-2-oxopropyl phosphate. The Proton acceptor role is filled by histidine 45. 1-deoxy-D-xylulose 5-phosphate-binding residues include arginine 47 and histidine 52. Glutamate 72 (proton acceptor) is an active-site residue. Threonine 102 contributes to the 1-deoxy-D-xylulose 5-phosphate binding site. Histidine 193 functions as the Proton donor in the catalytic mechanism. Residues glycine 194 and 215-216 (GH) contribute to the 3-amino-2-oxopropyl phosphate site.

This sequence belongs to the PNP synthase family. As to quaternary structure, homooctamer; tetramer of dimers.

The protein resides in the cytoplasm. The enzyme catalyses 3-amino-2-oxopropyl phosphate + 1-deoxy-D-xylulose 5-phosphate = pyridoxine 5'-phosphate + phosphate + 2 H2O + H(+). It functions in the pathway cofactor biosynthesis; pyridoxine 5'-phosphate biosynthesis; pyridoxine 5'-phosphate from D-erythrose 4-phosphate: step 5/5. Its function is as follows. Catalyzes the complicated ring closure reaction between the two acyclic compounds 1-deoxy-D-xylulose-5-phosphate (DXP) and 3-amino-2-oxopropyl phosphate (1-amino-acetone-3-phosphate or AAP) to form pyridoxine 5'-phosphate (PNP) and inorganic phosphate. The polypeptide is Pyridoxine 5'-phosphate synthase (Shigella boydii serotype 4 (strain Sb227)).